We begin with the raw amino-acid sequence, 209 residues long: Ribose 1,5-bisphosphate phosphokinase PhnN (209 aa).

27 to 34 (GPSGGGKD) contributes to the ATP binding site.

It belongs to the ribose 1,5-bisphosphokinase family.

The catalysed reaction is alpha-D-ribose 1,5-bisphosphate + ATP = 5-phospho-alpha-D-ribose 1-diphosphate + ADP. It functions in the pathway metabolic intermediate biosynthesis; 5-phospho-alpha-D-ribose 1-diphosphate biosynthesis; 5-phospho-alpha-D-ribose 1-diphosphate from D-ribose 5-phosphate (route II): step 3/3. In terms of biological role, catalyzes the phosphorylation of ribose 1,5-bisphosphate to 5-phospho-D-ribosyl alpha-1-diphosphate (PRPP). This chain is Ribose 1,5-bisphosphate phosphokinase PhnN, found in Chelativorans sp. (strain BNC1).